Consider the following 690-residue polypeptide: Elongation factor G (690 aa).

Residues 8 to 283 enclose the tr-type G domain; it reads EDYRNFGIMA…AVVDYLPSPV (276 aa). GTP contacts are provided by residues 17–24, 81–85, and 135–138; these read AHIDAGKT, DTPGH, and NKMD.

This sequence belongs to the TRAFAC class translation factor GTPase superfamily. Classic translation factor GTPase family. EF-G/EF-2 subfamily.

The protein localises to the cytoplasm. Its function is as follows. Catalyzes the GTP-dependent ribosomal translocation step during translation elongation. During this step, the ribosome changes from the pre-translocational (PRE) to the post-translocational (POST) state as the newly formed A-site-bound peptidyl-tRNA and P-site-bound deacylated tRNA move to the P and E sites, respectively. Catalyzes the coordinated movement of the two tRNA molecules, the mRNA and conformational changes in the ribosome. The polypeptide is Elongation factor G (Rhodopseudomonas palustris (strain HaA2)).